The primary structure comprises 613 residues: MTEASARTIGPLPSRFSRDPKTPRSTDNAAAALLLAFTVLAILWANSPWAQSYSTFWDTHVAVSFGEYRAELSVKHLVNDGLMAFFFFIVGLEVKSEFVIGELTDRSRAAVPVVAAIAGLIVPAVIFLTFNPSGPDAQAWGVVISTDTAFLVGALAVIKPKFPARLRIFLLTLAVVDDVGALGAIALFYTDDLKLAPLAVAALLIAALAMVRRLPSLRGPAYAVLGFALWIALYLAHVHPTLAGVAVAVLIPVFTPERRQVEQTVDLVRAFRQSPNPQYARAVTRGLRESISINERLQTAVGPYVSFVVLPIFALANAGVHLDEQTITAAMSSTLTWGIVAGLVVGKFVGITAATALMSATGWGQLAPGLSLRRVAGGAALSGIGFTISLFIVDVAIEDPARQDEARVGVLIASVLAFTLSWALFRITDWISPPEPVGLTLVRPVDPERDHIRGDPDAPLVLVEYGDYECPFCGRATGAIDEVRTHFGDDLLYVWRHFPLERAHPRSFDAARASEGAAAQGKFFEMGRELFAHQDDLEWSDMYRYAVAIGLDIEQFDQDVRVHASKVLHRVRDDAQDAEVMDLNSTPTFFVNGKRHKGPWDAASLIRALEAGR.

The disordered stretch occupies residues 1–24; sequence MTEASARTIGPLPSRFSRDPKTPR. Positions 1 to 408 are na(+)/H(+) antiporter NhaA; it reads MTEASARTIG…DPARQDEARV (408 aa). 11 helical membrane passes run 29–49, 81–101, 110–130, 138–158, 168–188, 191–211, 231–251, 300–320, 337–357, 377–397, and 408–428; these read AAAALLLAFTVLAILWANSPW, GLMAFFFFIVGLEVKSEFVIG, AVPVVAAIAGLIVPAVIFLTF, QAWGVVISTDTAFLVGALAVI, IFLLTLAVVDDVGALGAIALF, DDLKLAPLAVAALLIAALAMV, IALYLAHVHPTLAGVAVAVLI, AVGPYVSFVVLPIFALANAGV, WGIVAGLVVGKFVGITAATAL, GGAALSGIGFTISLFIVDVAI, and VGVLIASVLAFTLSWALFRIT. Positions 409-613 constitute a Thioredoxin domain; the sequence is GVLIASVLAF…SLIRALEAGR (205 aa).

The protein in the N-terminal section; belongs to the NhaA Na(+)/H(+) (TC 2.A.33) antiporter family.

Its subcellular location is the cell membrane. It catalyses the reaction Na(+)(in) + 2 H(+)(out) = Na(+)(out) + 2 H(+)(in). Its function is as follows. Na(+)/H(+) antiporter that extrudes sodium in exchange for external protons. The chain is Na(+)/H(+) antiporter NhaA 1 from Mycobacterium sp. (strain JLS).